The following is a 342-amino-acid chain: Ketoreductase nvfG (342 aa).

Belongs to the NAD(P)-dependent epimerase/dehydratase family. Dihydroflavonol-4-reductase subfamily.

The protein operates within secondary metabolite biosynthesis; terpenoid biosynthesis. Its function is as follows. Ketoreductase; part of the gene cluster that mediates the biosynthesis of novofumigatonin, a heavily oxygenated meroterpenoid containing a unique orthoester moiety. The first step of the pathway is the synthesis of 3,5-dimethylorsellinic acid (DMOA) by the polyketide synthase nvfA via condensation of one acetyl-CoA starter unit with 3 malonyl-CoA units and 2 methylations. DMOA is then converted to farnesyl-DMOA by the farnesyltransferase nvfB. Epoxydation by FAD-dependent monooxygenase nvfK, followed by a protonation-initiated cyclization catalyzed by the terpene cyclase nvfL leads to the production of asnavolin H. The short chain dehydrogenase nvfC then as a 3-OH dehydrogenase of asnovolin H to yield chemesin D. There are two branches to synthesize asnovolin A from chemesin D. In one branch, chemesin D undergoes Baeyer-Villiger oxidation by nvfH, methylation by nvfJ, and enoyl reduction by the nvfM D enoylreductase that reduces the double bond between C-5'and C-6', to form respectively asnovolin I, asnovolin K, and asnovolin A. In the other branch, the methylation precedes the Baeyer-Villiger oxidation and the enoyl reduction to yield asnovolin A via the asnovolin J intermediate. Asnovolin A is further converted to fumigatonoid A by the Fe(II)/2-oxoglutarate-dependent dioxygenase nvfI that catalyzes an endoperoxidation reaction. The alpha/beta hydrolase nvfD then acts as an epimerase that converts fumigatonoid A to its C-5' epimer, which then undergoes spontaneous or nvfD-catalyzed lactonization. The following step utilizes the ketoreductase nvfG to produce fumigatonoid B. The dioxygenase nvfE further converts fumigatonoid B into fumigatonoid C. Finally the Fe(II)/2-oxoglutarate-dependent dioxygenase nvfF catalyzes two rounds of oxidation to transform fumigatonoid C into the end product, novofumigatonin A. This is Ketoreductase nvfG from Aspergillus novofumigatus (strain IBT 16806).